The following is a 392-amino-acid chain: Nicotinate phosphoribosyltransferase (392 aa).

His214 carries the post-translational modification Phosphohistidine; by autocatalysis.

Belongs to the NAPRTase family. Post-translationally, transiently phosphorylated on a His residue during the reaction cycle. Phosphorylation strongly increases the affinity for substrates and increases the rate of nicotinate D-ribonucleotide production. Dephosphorylation regenerates the low-affinity form of the enzyme, leading to product release.

The enzyme catalyses nicotinate + 5-phospho-alpha-D-ribose 1-diphosphate + ATP + H2O = nicotinate beta-D-ribonucleotide + ADP + phosphate + diphosphate. It participates in cofactor biosynthesis; NAD(+) biosynthesis; nicotinate D-ribonucleotide from nicotinate: step 1/1. Functionally, catalyzes the synthesis of beta-nicotinate D-ribonucleotide from nicotinate and 5-phospho-D-ribose 1-phosphate at the expense of ATP. This is Nicotinate phosphoribosyltransferase from Xanthomonas euvesicatoria pv. vesicatoria (strain 85-10) (Xanthomonas campestris pv. vesicatoria).